The following is a 441-amino-acid chain: MTSMTPQEIVSELDKHIVGQSSAKRAVAIALRNRWRRQQVQGSLRQEITPKNILMIGPTGVGKTEIARRLAKLADAPFIKVEATKFTEVGYVGKDVDSIIRDLADMAVKQTRESEMKKVRARAEDAAEDRILDVLIPPPRGADGAEPAADGTTRQMFRKKLREGLLDDKDIEIDVTESRPHLEIMGPQGMEEMTEQLRSMFSQFGQDKRRTRKLKIAEAMKLLTDEEAGKLVNEEEIKTRALANAEQNGIVFIDEIDKVATRQETSGADVSRQGVQRDLLPLVEGTTVSTKYGMIKTDHILFIASGAFHLSRPSDLIPELQGRFPIRVELESLSVQDFEAILTQTHASLVKQYQALLATEDVTLAFVPQGITRLACIAFEVNERTENIGARRLSTVMERLLDEVSFDATRLSGQTVTIDEGYVDQRLQQLSLNEDLSRYIL.

Residues Val18, 60 to 65 (GVGKTE), Asp254, Glu319, and Arg391 each bind ATP.

It belongs to the ClpX chaperone family. HslU subfamily. As to quaternary structure, a double ring-shaped homohexamer of HslV is capped on each side by a ring-shaped HslU homohexamer. The assembly of the HslU/HslV complex is dependent on binding of ATP.

It localises to the cytoplasm. Its function is as follows. ATPase subunit of a proteasome-like degradation complex; this subunit has chaperone activity. The binding of ATP and its subsequent hydrolysis by HslU are essential for unfolding of protein substrates subsequently hydrolyzed by HslV. HslU recognizes the N-terminal part of its protein substrates and unfolds these before they are guided to HslV for hydrolysis. The sequence is that of ATP-dependent protease ATPase subunit HslU from Verminephrobacter eiseniae (strain EF01-2).